The following is a 117-amino-acid chain: Large ribosomal subunit protein uL18 (117 aa).

The protein belongs to the universal ribosomal protein uL18 family. In terms of assembly, part of the 50S ribosomal subunit; part of the 5S rRNA/L5/L18/L25 subcomplex. Contacts the 5S and 23S rRNAs.

Its function is as follows. This is one of the proteins that bind and probably mediate the attachment of the 5S RNA into the large ribosomal subunit, where it forms part of the central protuberance. This chain is Large ribosomal subunit protein uL18, found in Coxiella burnetii (strain CbuK_Q154) (Coxiella burnetii (strain Q154)).